Here is a 181-residue protein sequence, read N- to C-terminus: Protein Abitram (181 aa).

This sequence belongs to the ABITRAM family. Interacts with F-actin. Interacts with G-actin.

The protein localises to the nucleus speckle. Its subcellular location is the cell projection. It localises to the lamellipodium. It is found in the nucleus. The protein resides in the growth cone. The protein localises to the dendrite. Its function is as follows. Actin-binding protein that regulates actin polymerization, filopodia dynamics and increases the branching of proximal dendrites of developing neurons. The protein is Protein Abitram of Homo sapiens (Human).